The following is a 141-amino-acid chain: Transmembrane protein 216 (141 aa).

The next 4 helical transmembrane spans lie at Ile-15–Phe-35, Leu-49–Phe-69, Leu-82–Leu-102, and Ser-115–Phe-135.

Part of the tectonic-like complex (also named B9 complex). Interacts with TMEM107.

It localises to the membrane. Its subcellular location is the cytoplasm. It is found in the cytoskeleton. The protein resides in the cilium basal body. Part of the tectonic-like complex which is required for tissue-specific ciliogenesis and may regulate ciliary membrane composition. This chain is Transmembrane protein 216 (TMEM216), found in Bos taurus (Bovine).